The following is a 406-amino-acid chain: 8-amino-7-oxononanoate synthase (406 aa).

Arg21 is a substrate binding site. Position 112–113 (112–113 (GY)) interacts with pyridoxal 5'-phosphate. Residue His137 coordinates substrate. 3 residues coordinate pyridoxal 5'-phosphate: Ser183, His211, and Thr239. An N6-(pyridoxal phosphate)lysine modification is found at Lys242. Position 358 (Thr358) interacts with substrate.

The protein belongs to the class-II pyridoxal-phosphate-dependent aminotransferase family. BioF subfamily. Homodimer. Pyridoxal 5'-phosphate serves as cofactor.

It carries out the reaction 6-carboxyhexanoyl-[ACP] + L-alanine + H(+) = (8S)-8-amino-7-oxononanoate + holo-[ACP] + CO2. It participates in cofactor biosynthesis; biotin biosynthesis. Catalyzes the decarboxylative condensation of pimeloyl-[acyl-carrier protein] and L-alanine to produce 8-amino-7-oxononanoate (AON), [acyl-carrier protein], and carbon dioxide. This chain is 8-amino-7-oxononanoate synthase, found in Burkholderia cenocepacia (strain HI2424).